Consider the following 123-residue polypeptide: MIQEQTMLNVADNSGARRVMCIKVLGGSHRRYAGVGDIIKITIKEAIPRGKVKKGDVLKAVVVRTKKGVRRPDGSVIRFDGNACVILNNNSEQPIGTRIFGPVTRELRTEKFMKIISLAPEVL.

It belongs to the universal ribosomal protein uL14 family. Part of the 50S ribosomal subunit. Forms a cluster with proteins L3 and L19. In the 70S ribosome, L14 and L19 interact and together make contacts with the 16S rRNA in bridges B5 and B8.

Binds to 23S rRNA. Forms part of two intersubunit bridges in the 70S ribosome. This Citrobacter koseri (strain ATCC BAA-895 / CDC 4225-83 / SGSC4696) protein is Large ribosomal subunit protein uL14.